We begin with the raw amino-acid sequence, 436 residues long: Gamma-glutamyl phosphate reductase (436 aa).

It belongs to the gamma-glutamyl phosphate reductase family.

The protein localises to the cytoplasm. It catalyses the reaction L-glutamate 5-semialdehyde + phosphate + NADP(+) = L-glutamyl 5-phosphate + NADPH + H(+). The protein operates within amino-acid biosynthesis; L-proline biosynthesis; L-glutamate 5-semialdehyde from L-glutamate: step 2/2. Catalyzes the NADPH-dependent reduction of L-glutamate 5-phosphate into L-glutamate 5-semialdehyde and phosphate. The product spontaneously undergoes cyclization to form 1-pyrroline-5-carboxylate. This chain is Gamma-glutamyl phosphate reductase, found in Salinibacter ruber (strain DSM 13855 / M31).